A 297-amino-acid chain; its full sequence is MRIVLITGISGSGKSVALNALEDAGYYCVDNLPPHVLPELARYLAHEGQNRLAVAIDARSSASLDEMPGLIRALSHEHDVRVLFLNASTQALIQRFSETRRRHPLSGSPSHDADVGLLVSLEEAIERERELVAPLAEFGHQIDTSNLRANVLRTWVKRFIEQKNDDLVLMFESFGFKRGVPLDADFMFDVRALPNPYYDHELRPLTGLDQPVVAFLDALPVVHQMLDDIETFLVKWLPHFREDNRSYLTVAIGCTGGQHRSVFLAETLAARLSRQASVIVRHRDAPVAVDASSRLVT.

Residue 8 to 15 (GISGSGKS) coordinates ATP. 57 to 60 (DARS) serves as a coordination point for GTP.

It belongs to the RapZ-like family.

In terms of biological role, displays ATPase and GTPase activities. The polypeptide is Nucleotide-binding protein BMA10229_A1510 (Burkholderia mallei (strain NCTC 10229)).